Here is a 188-residue protein sequence, read N- to C-terminus: Small ribosomal subunit protein uS12m (188 aa).

A mitochondrion-targeting transit peptide spans 1–63 (MSGGRWISNL…AAFRLPQSSG (63 aa)).

The protein belongs to the universal ribosomal protein uS12 family.

The protein localises to the mitochondrion. In terms of biological role, protein S12 is involved in the translation initiation step. This Oenothera elata subsp. hookeri (Hooker's evening primrose) protein is Small ribosomal subunit protein uS12m (RPS12).